The chain runs to 302 residues: D-alanine--D-alanine ligase (302 aa).

An ATP-grasp domain is found at Lys-100–Gln-294. Gly-127–Thr-180 lines the ATP pocket. Residues Asp-248, Glu-261, and Asn-263 each coordinate Mg(2+).

This sequence belongs to the D-alanine--D-alanine ligase family. Mg(2+) serves as cofactor. Requires Mn(2+) as cofactor.

Its subcellular location is the cytoplasm. It carries out the reaction 2 D-alanine + ATP = D-alanyl-D-alanine + ADP + phosphate + H(+). The protein operates within cell wall biogenesis; peptidoglycan biosynthesis. Functionally, cell wall formation. The chain is D-alanine--D-alanine ligase from Lawsonia intracellularis (strain PHE/MN1-00).